Consider the following 299-residue polypeptide: Lysine exporter LysO (299 aa).

The next 8 helical transmembrane spans lie at 1 to 21 (MFSGLLIILVPLIVGYLIPLR), 31 to 51 (QLLSWMVYLILFFMGISLAFL), 58 to 78 (LLAILHYSAVSITVILLCNIA), 109 to 129 (LKLCGVVVIGFAIGLSGLAFL), 131 to 151 (HATEASEYTLILLLFLVGIQL), 169 to 189 (IVAVVVVVSSLIGGLINAFIL), 207 to 227 (SLSGILLTESFGPVIGSAAFF), and 277 to 297 (PAAIVHGFILSLLVPILIAFF).

Belongs to the LysO family.

The protein localises to the cell inner membrane. Functionally, mediates export of lysine. This chain is Lysine exporter LysO, found in Escherichia coli (strain K12).